The sequence spans 416 residues: Adenosylhomocysteinase (416 aa).

Residues Thr-55, Asp-126, and Glu-151 each contribute to the substrate site. Residue 152 to 154 coordinates NAD(+); that stretch reads TTT. 2 residues coordinate substrate: Lys-181 and Asp-185. NAD(+) contacts are provided by residues Asn-186, 215–220, Glu-238, Asn-273, 294–296, and Asn-341; these read GYGWVG and AGH.

This sequence belongs to the adenosylhomocysteinase family. NAD(+) serves as cofactor.

The protein resides in the cytoplasm. It carries out the reaction S-adenosyl-L-homocysteine + H2O = L-homocysteine + adenosine. It functions in the pathway amino-acid biosynthesis; L-homocysteine biosynthesis; L-homocysteine from S-adenosyl-L-homocysteine: step 1/1. May play a key role in the regulation of the intracellular concentration of adenosylhomocysteine. This is Adenosylhomocysteinase from Aeropyrum pernix (strain ATCC 700893 / DSM 11879 / JCM 9820 / NBRC 100138 / K1).